Here is a 412-residue protein sequence, read N- to C-terminus: Serine hydroxymethyltransferase (412 aa).

(6S)-5,6,7,8-tetrahydrofolate-binding positions include leucine 121 and glycine 125–leucine 127. Lysine 230 carries the post-translational modification N6-(pyridoxal phosphate)lysine. Threonine 353–phenylalanine 355 contributes to the (6S)-5,6,7,8-tetrahydrofolate binding site.

This sequence belongs to the SHMT family. Homodimer. Requires pyridoxal 5'-phosphate as cofactor.

The protein localises to the cytoplasm. It catalyses the reaction (6R)-5,10-methylene-5,6,7,8-tetrahydrofolate + glycine + H2O = (6S)-5,6,7,8-tetrahydrofolate + L-serine. The protein operates within one-carbon metabolism; tetrahydrofolate interconversion. Its pathway is amino-acid biosynthesis; glycine biosynthesis; glycine from L-serine: step 1/1. In terms of biological role, catalyzes the reversible interconversion of serine and glycine with tetrahydrofolate (THF) serving as the one-carbon carrier. This reaction serves as the major source of one-carbon groups required for the biosynthesis of purines, thymidylate, methionine, and other important biomolecules. Also exhibits THF-independent aldolase activity toward beta-hydroxyamino acids, producing glycine and aldehydes, via a retro-aldol mechanism. This Finegoldia magna (strain ATCC 29328 / DSM 20472 / WAL 2508) (Peptostreptococcus magnus) protein is Serine hydroxymethyltransferase.